A 185-amino-acid chain; its full sequence is Elongation factor P (185 aa).

This sequence belongs to the elongation factor P family.

It localises to the cytoplasm. It participates in protein biosynthesis; polypeptide chain elongation. Its function is as follows. Involved in peptide bond synthesis. Stimulates efficient translation and peptide-bond synthesis on native or reconstituted 70S ribosomes in vitro. Probably functions indirectly by altering the affinity of the ribosome for aminoacyl-tRNA, thus increasing their reactivity as acceptors for peptidyl transferase. The chain is Elongation factor P from Kosmotoga olearia (strain ATCC BAA-1733 / DSM 21960 / TBF 19.5.1).